We begin with the raw amino-acid sequence, 419 residues long: L-rhamnose isomerase (419 aa).

3 residues coordinate Mn(2+): H262, D294, and D296.

The protein belongs to the rhamnose isomerase family. Homotetramer. The cofactor is Mn(2+).

The protein localises to the cytoplasm. It catalyses the reaction L-rhamnopyranose = L-rhamnulose. The protein operates within carbohydrate degradation; L-rhamnose degradation; glycerone phosphate from L-rhamnose: step 1/3. Catalyzes the interconversion of L-rhamnose and L-rhamnulose. The polypeptide is L-rhamnose isomerase (Shigella flexneri).